Here is a 480-residue protein sequence, read N- to C-terminus: Aspartyl/glutamyl-tRNA(Asn/Gln) amidotransferase subunit B (480 aa).

Belongs to the GatB/GatE family. GatB subfamily. As to quaternary structure, heterotrimer of A, B and C subunits.

The enzyme catalyses L-glutamyl-tRNA(Gln) + L-glutamine + ATP + H2O = L-glutaminyl-tRNA(Gln) + L-glutamate + ADP + phosphate + H(+). It carries out the reaction L-aspartyl-tRNA(Asn) + L-glutamine + ATP + H2O = L-asparaginyl-tRNA(Asn) + L-glutamate + ADP + phosphate + 2 H(+). Its function is as follows. Allows the formation of correctly charged Asn-tRNA(Asn) or Gln-tRNA(Gln) through the transamidation of misacylated Asp-tRNA(Asn) or Glu-tRNA(Gln) in organisms which lack either or both of asparaginyl-tRNA or glutaminyl-tRNA synthetases. The reaction takes place in the presence of glutamine and ATP through an activated phospho-Asp-tRNA(Asn) or phospho-Glu-tRNA(Gln). The chain is Aspartyl/glutamyl-tRNA(Asn/Gln) amidotransferase subunit B from Streptococcus pneumoniae (strain 70585).